The primary structure comprises 28 residues: Omega-gliadin (28 aa).

The tract at residues 1–28 (ARQLNPSDQELQSPQQLYPQQPYPQQPY) is disordered. The segment covering 9–20 (QELQSPQQLYPQ) has biased composition (low complexity).

The chain is Omega-gliadin from Triticum monococcum (Einkorn wheat).